Reading from the N-terminus, the 80-residue chain is Cell division activator CedA (80 aa).

Belongs to the CedA family.

In terms of biological role, activates the cell division inhibited by chromosomal DNA over-replication. This Salmonella typhimurium (strain LT2 / SGSC1412 / ATCC 700720) protein is Cell division activator CedA.